The sequence spans 197 residues: Imidazoleglycerol-phosphate dehydratase (197 aa).

It belongs to the imidazoleglycerol-phosphate dehydratase family.

It localises to the cytoplasm. It catalyses the reaction D-erythro-1-(imidazol-4-yl)glycerol 3-phosphate = 3-(imidazol-4-yl)-2-oxopropyl phosphate + H2O. The protein operates within amino-acid biosynthesis; L-histidine biosynthesis; L-histidine from 5-phospho-alpha-D-ribose 1-diphosphate: step 6/9. The chain is Imidazoleglycerol-phosphate dehydratase from Marinomonas sp. (strain MWYL1).